The sequence spans 417 residues: Type II methyltransferase M.Eco47II (417 aa).

The region spanning 81 to 414 (YTVLELFAGA…KSVVHLLDKI (334 aa)) is the SAM-dependent MTase C5-type domain. Cys-153 is an active-site residue.

This sequence belongs to the class I-like SAM-binding methyltransferase superfamily. C5-methyltransferase family.

The enzyme catalyses a 2'-deoxycytidine in DNA + S-adenosyl-L-methionine = a 5-methyl-2'-deoxycytidine in DNA + S-adenosyl-L-homocysteine + H(+). A methylase that recognizes the double-stranded sequence 5'-GGNCC-3', methylates C-? on both strands, and protects the DNA from cleavage by both the Eco47I and Eco47II endonucleases. The sequence is that of Type II methyltransferase M.Eco47II from Escherichia coli.